A 438-amino-acid chain; its full sequence is sn-glycerol-3-phosphate-binding periplasmic protein UgpB (438 aa).

Positions Met1–Ala23 are cleaved as a signal peptide. Residues Tyr65, Glu89, Ser144, Ser270, Gly307, Tyr346, and Arg397 each contribute to the sn-glycerol 3-phosphate site.

It belongs to the bacterial solute-binding protein 1 family. In terms of assembly, the complex is composed of two ATP-binding proteins (UgpC), two transmembrane proteins (UgpA and UgpE) and a solute-binding protein (UgpB).

The protein resides in the periplasm. Part of the ABC transporter complex UgpBAEC involved in sn-glycerol-3-phosphate (G3P) import. Binds G3P. The protein is sn-glycerol-3-phosphate-binding periplasmic protein UgpB (ugpB) of Shigella flexneri serotype 5b (strain 8401).